The primary structure comprises 426 residues: Serine hydroxymethyltransferase (426 aa).

(6S)-5,6,7,8-tetrahydrofolate is bound by residues Leu-113 and 117–119 (GHL). Position 222 is an N6-(pyridoxal phosphate)lysine (Lys-222). 363-365 (SAF) provides a ligand contact to (6S)-5,6,7,8-tetrahydrofolate.

It belongs to the SHMT family. As to quaternary structure, homodimer. It depends on pyridoxal 5'-phosphate as a cofactor.

Its subcellular location is the cytoplasm. The catalysed reaction is (6R)-5,10-methylene-5,6,7,8-tetrahydrofolate + glycine + H2O = (6S)-5,6,7,8-tetrahydrofolate + L-serine. It functions in the pathway one-carbon metabolism; tetrahydrofolate interconversion. It participates in amino-acid biosynthesis; glycine biosynthesis; glycine from L-serine: step 1/1. Catalyzes the reversible interconversion of serine and glycine with tetrahydrofolate (THF) serving as the one-carbon carrier. This reaction serves as the major source of one-carbon groups required for the biosynthesis of purines, thymidylate, methionine, and other important biomolecules. Also exhibits THF-independent aldolase activity toward beta-hydroxyamino acids, producing glycine and aldehydes, via a retro-aldol mechanism. The chain is Serine hydroxymethyltransferase from Phocaeicola vulgatus (strain ATCC 8482 / DSM 1447 / JCM 5826 / CCUG 4940 / NBRC 14291 / NCTC 11154) (Bacteroides vulgatus).